The chain runs to 492 residues: GlcNAc-binding protein A (492 aa).

A signal peptide spans Met-1–Ala-23. Positions His-24–Phe-204 constitute a Chitin-binding type-4 domain. A Chitin-binding type-3 domain is found at Ala-443 to Trp-484.

This sequence belongs to the GbpA family.

The protein resides in the secreted. In terms of biological role, probably interacts with GlcNAc residues. May promote attachment to both epithelial cell surfaces and chitin. This chain is GlcNAc-binding protein A, found in Aliivibrio fischeri (strain ATCC 700601 / ES114) (Vibrio fischeri).